Here is a 439-residue protein sequence, read N- to C-terminus: 23S rRNA (uracil(1939)-C(5))-methyltransferase RlmD (439 aa).

Residues arginine 5–glutamate 63 form the TRAM domain. 4 residues coordinate [4Fe-4S] cluster: cysteine 76, cysteine 82, cysteine 85, and cysteine 164. Residues glutamine 271, phenylalanine 300, asparagine 305, glutamate 321, aspartate 348, and aspartate 370 each contribute to the S-adenosyl-L-methionine site. Catalysis depends on cysteine 396, which acts as the Nucleophile.

This sequence belongs to the class I-like SAM-binding methyltransferase superfamily. RNA M5U methyltransferase family. RlmD subfamily.

It carries out the reaction uridine(1939) in 23S rRNA + S-adenosyl-L-methionine = 5-methyluridine(1939) in 23S rRNA + S-adenosyl-L-homocysteine + H(+). Its function is as follows. Catalyzes the formation of 5-methyl-uridine at position 1939 (m5U1939) in 23S rRNA. The chain is 23S rRNA (uracil(1939)-C(5))-methyltransferase RlmD from Vesicomyosocius okutanii subsp. Calyptogena okutanii (strain HA).